Here is a 263-residue protein sequence, read N- to C-terminus: Indole-3-glycerol phosphate synthase (263 aa).

It belongs to the TrpC family.

It carries out the reaction 1-(2-carboxyphenylamino)-1-deoxy-D-ribulose 5-phosphate + H(+) = (1S,2R)-1-C-(indol-3-yl)glycerol 3-phosphate + CO2 + H2O. It participates in amino-acid biosynthesis; L-tryptophan biosynthesis; L-tryptophan from chorismate: step 4/5. The protein is Indole-3-glycerol phosphate synthase of Desulfosudis oleivorans (strain DSM 6200 / JCM 39069 / Hxd3) (Desulfococcus oleovorans).